The chain runs to 485 residues: MNLKELLHNIDIDAKVYGKISPIEVRNLTKDSRNIGFGDIFIANKGKRCDGNDFASLAVENGAIAVVSSIYNPFLSVVQIISPNLSLLEAQLAAKYYNYPSRKLCVVGITGTNGKTTVSHLIKFLFDACDKPSGLIGTIEHILGNNRIQDGFTTPESCLLQKYLAEMVKSNLTAAVIETSSIGLVLDRLANVEFDVGVLTNVTLDHLDFHDSFEEYIKAKLQLFAQLSDSGLAVVNNDLPQAKQFLEATRAVPVTYGIEQLADYRASNLRFSPFGADFDLIHKGEIFPCHSPLIGQYNVYNVLAAIAVTHQRLNCDLQQLVSLVASVKSPRGRLEPIQSGPCPIYIDYAHTPDALDNVCQTLRTLLPSGGKLIVVFGCGGDRDRSKRKIMAQVVEKYGFAVVTSDNPRGEDPETIVNEICSGFVKRNFSIEIDRKQAITYALSIASDRDIVLVAGKGHETYQIFKHQTIAFDDREVVHEVLSSYV.

S32 contributes to the UDP-N-acetyl-alpha-D-muramoyl-L-alanyl-D-glutamate binding site. 111–117 (GTNGKTT) serves as a coordination point for ATP. Residues 153–154 (TT), S180, and R188 each bind UDP-N-acetyl-alpha-D-muramoyl-L-alanyl-D-glutamate. K220 bears the N6-carboxylysine mark. Residues R382, 405–408 (DNPR), G455, and E459 contribute to the meso-2,6-diaminopimelate site. The Meso-diaminopimelate recognition motif signature appears at 405–408 (DNPR).

The protein belongs to the MurCDEF family. MurE subfamily. Requires Mg(2+) as cofactor. Post-translationally, carboxylation is probably crucial for Mg(2+) binding and, consequently, for the gamma-phosphate positioning of ATP.

The protein localises to the cytoplasm. It carries out the reaction UDP-N-acetyl-alpha-D-muramoyl-L-alanyl-D-glutamate + meso-2,6-diaminopimelate + ATP = UDP-N-acetyl-alpha-D-muramoyl-L-alanyl-gamma-D-glutamyl-meso-2,6-diaminopimelate + ADP + phosphate + H(+). It participates in cell wall biogenesis; peptidoglycan biosynthesis. In terms of biological role, catalyzes the addition of meso-diaminopimelic acid to the nucleotide precursor UDP-N-acetylmuramoyl-L-alanyl-D-glutamate (UMAG) in the biosynthesis of bacterial cell-wall peptidoglycan. The polypeptide is UDP-N-acetylmuramoyl-L-alanyl-D-glutamate--2,6-diaminopimelate ligase (Chlamydia felis (strain Fe/C-56) (Chlamydophila felis)).